The primary structure comprises 198 residues: Sporulation-specific protein 16 (198 aa).

In terms of biological role, necessary for efficient spore formation. This Saccharomyces cerevisiae (strain ATCC 204508 / S288c) (Baker's yeast) protein is Sporulation-specific protein 16 (SPO16).